We begin with the raw amino-acid sequence, 353 residues long: Serine/threonine-protein kinase SRK2G (353 aa).

One can recognise a Protein kinase domain in the interval Tyr4–Tyr260. Residues Leu10–Ala18 and Lys33 each bind ATP. Catalysis depends on Asp123, which acts as the Proton acceptor. The disordered stretch occupies residues Arg299–Ala353. The segment covering Ala302–Ser313 has biased composition (polar residues). Residues Ala315–Glu336 are compositionally biased toward acidic residues. The span at Tyr337–Ala353 shows a compositional bias: basic and acidic residues.

The protein belongs to the protein kinase superfamily. Ser/Thr protein kinase family. In terms of tissue distribution, expressed in seedlings.

Its subcellular location is the nucleus. It carries out the reaction L-seryl-[protein] + ATP = O-phospho-L-seryl-[protein] + ADP + H(+). The catalysed reaction is L-threonyl-[protein] + ATP = O-phospho-L-threonyl-[protein] + ADP + H(+). The sequence is that of Serine/threonine-protein kinase SRK2G (SRK2G) from Arabidopsis thaliana (Mouse-ear cress).